Here is a 359-residue protein sequence, read N- to C-terminus: Peptide chain release factor 1 (359 aa).

N5-methylglutamine is present on Gln236.

The protein belongs to the prokaryotic/mitochondrial release factor family. Post-translationally, methylated by PrmC. Methylation increases the termination efficiency of RF1.

It is found in the cytoplasm. Its function is as follows. Peptide chain release factor 1 directs the termination of translation in response to the peptide chain termination codons UAG and UAA. This Streptococcus mutans serotype c (strain ATCC 700610 / UA159) protein is Peptide chain release factor 1.